A 489-amino-acid polypeptide reads, in one-letter code: MTFRHCVAVDLGASSGRVMLARYDSKHRTLTLREIHRFVNCLQKTDGFDTWDIDSLEKDIRLGLKKVCNEGILIDSISIDTWGVDYVLLDKQGQRVGLPVSYRDNRTTGIMPQALVQIGKSEIYRRSGIQFLPFNTIYQLHALTKQQPELTAQVAHALLMPDYFSYRLTGEMNWEYTNATTTQLVNINTDDWDDTLLAWTGAKKSWFGRPSHPGNVIGDWICPQGNRIPVVAVASHDTASAVIASPLANKHSAYLSSGTWSLMGFESKKPYTTDEALAANITNEGGAEGRYRVLKNIMGLWLLQRVLKERRITDLPALIAQTEALPACRFLINPNDDRFINPDDMRAEIQAACRETDQPVPVSDAELARCIFDSLALLYADILHELANLRGEKFTQLHIVGGGCQNALLNQLCADACGIRVMAGPVEASTLGNIGIQLMTLDELNNVDDFRQVVSANYDLTTYIPNPDSEIARHVAQFQPKRQTKELCA.

An ATP-binding site is contributed by 13–17 (ASSGR). The cysteines at positions 68 and 222 are disulfide-linked. Residues glycine 83 and 236 to 238 (HDT) contribute to the substrate site. The Proton acceptor role is filled by aspartate 237. An ATP-binding site is contributed by threonine 259. Asparagine 296 is a binding site for substrate. Residue glutamine 304 participates in ATP binding. A disulfide bridge connects residues cysteine 353 and cysteine 370. Glycine 402 is a binding site for ATP. An intrachain disulfide couples cysteine 413 to cysteine 417.

This sequence belongs to the rhamnulokinase family. Requires Mg(2+) as cofactor.

It catalyses the reaction L-rhamnulose + ATP = L-rhamnulose 1-phosphate + ADP + H(+). The protein operates within carbohydrate degradation; L-rhamnose degradation; glycerone phosphate from L-rhamnose: step 2/3. In terms of biological role, involved in the catabolism of L-rhamnose (6-deoxy-L-mannose). Catalyzes the transfer of the gamma-phosphate group from ATP to the 1-hydroxyl group of L-rhamnulose to yield L-rhamnulose 1-phosphate. The sequence is that of Rhamnulokinase from Salmonella dublin (strain CT_02021853).